The chain runs to 269 residues: Subtilisin BL (269 aa).

Gln2 lines the Ca(2+) pocket. Residues 5–268 form the Peptidase S8 domain; that stretch reads PWGISRVQAP…SGLVNAEAAT (264 aa). Asp32 acts as the Charge relay system in catalysis. Asp40 contributes to the Ca(2+) binding site. His62 serves as the catalytic Charge relay system. Positions 73, 75, 77, 79, 163, 165, and 168 each coordinate Ca(2+). The active-site Charge relay system is Ser215.

The protein belongs to the peptidase S8 family. Ca(2+) serves as cofactor.

The protein localises to the secreted. The catalysed reaction is Hydrolysis of proteins with broad specificity for peptide bonds, and a preference for a large uncharged residue in P1. Hydrolyzes peptide amides.. Functionally, subtilisin is an extracellular alkaline serine protease, it catalyzes the hydrolysis of proteins and peptide amides. The sequence is that of Subtilisin BL from Lederbergia lenta (Bacillus lentus).